The chain runs to 402 residues: Probable peptidoglycan glycosyltransferase FtsW (402 aa).

The Cytoplasmic segment spans residues Met-1 to Glu-24. The chain crosses the membrane as a helical span at residues Ile-25–Thr-45. The Periplasmic portion of the chain corresponds to Ser-46 to Ser-63. The chain crosses the membrane as a helical span at residues Ile-64–Pro-84. Residues Thr-85–Asn-91 lie on the Cytoplasmic side of the membrane. The chain crosses the membrane as a helical span at residues Tyr-92–Gly-112. Over Lys-113–Trp-121 the chain is Periplasmic. Residues Ile-122–Phe-142 traverse the membrane as a helical segment. Residues Phe-143 to Gly-160 lie on the Cytoplasmic side of the membrane. A run of 2 helical transmembrane segments spans residues Ile-161 to Phe-181 and Gly-182 to Val-202. Position 203 (Arg-203) is a topological domain, cytoplasmic. The chain crosses the membrane as a helical span at residues Trp-204–Pro-224. At Tyr-225–Ser-284 the chain is on the periplasmic side. A helical membrane pass occupies residues Val-285–Ile-305. At Val-306–Gln-324 the chain is on the cytoplasmic side. The chain crosses the membrane as a helical span at residues Ala-325–Val-345. The Periplasmic segment spans residues Asn-346–Leu-357. Residues Pro-358 to Val-378 form a helical membrane-spanning segment. Residues Arg-379–Lys-402 are Cytoplasmic-facing.

Belongs to the SEDS family. FtsW subfamily.

It localises to the cell inner membrane. It catalyses the reaction [GlcNAc-(1-&gt;4)-Mur2Ac(oyl-L-Ala-gamma-D-Glu-L-Lys-D-Ala-D-Ala)](n)-di-trans,octa-cis-undecaprenyl diphosphate + beta-D-GlcNAc-(1-&gt;4)-Mur2Ac(oyl-L-Ala-gamma-D-Glu-L-Lys-D-Ala-D-Ala)-di-trans,octa-cis-undecaprenyl diphosphate = [GlcNAc-(1-&gt;4)-Mur2Ac(oyl-L-Ala-gamma-D-Glu-L-Lys-D-Ala-D-Ala)](n+1)-di-trans,octa-cis-undecaprenyl diphosphate + di-trans,octa-cis-undecaprenyl diphosphate + H(+). The protein operates within cell wall biogenesis; peptidoglycan biosynthesis. Its function is as follows. Peptidoglycan polymerase that is essential for cell division. The protein is Probable peptidoglycan glycosyltransferase FtsW of Francisella salina.